The sequence spans 270 residues: Phosphatidylglycerol--prolipoprotein diacylglyceryl transferase (270 aa).

Transmembrane regions (helical) follow at residues 18–38 (IAVHWYGIIIGLGALLGLWLA), 55–75 (LVLFAIPIAILCARAYYVIFQ), 89–109 (IWNGGLAIHGGLIGAVLTGII), and 115–135 (GLSFWKLADIAAPSILLGQAI). Arginine 137 contacts a 1,2-diacyl-sn-glycero-3-phospho-(1'-sn-glycerol). The next 3 membrane-spanning stretches (helical) occupy residues 177-197 (QPTFLYESLWSFTGVVVLLLL), 205-225 (GELFLIYVIWYSMGRYFIEGL), and 236-256 (LRIAQVISIVLILCAAALIAY).

Belongs to the Lgt family.

It is found in the cell membrane. It carries out the reaction L-cysteinyl-[prolipoprotein] + a 1,2-diacyl-sn-glycero-3-phospho-(1'-sn-glycerol) = an S-1,2-diacyl-sn-glyceryl-L-cysteinyl-[prolipoprotein] + sn-glycerol 1-phosphate + H(+). It participates in protein modification; lipoprotein biosynthesis (diacylglyceryl transfer). Its function is as follows. Catalyzes the transfer of the diacylglyceryl group from phosphatidylglycerol to the sulfhydryl group of the N-terminal cysteine of a prolipoprotein, the first step in the formation of mature lipoproteins. This chain is Phosphatidylglycerol--prolipoprotein diacylglyceryl transferase, found in Bacillus licheniformis (strain ATCC 14580 / DSM 13 / JCM 2505 / CCUG 7422 / NBRC 12200 / NCIMB 9375 / NCTC 10341 / NRRL NRS-1264 / Gibson 46).